Here is a 743-residue protein sequence, read N- to C-terminus: Capsid protein (743 aa).

The disordered stretch occupies residues 665 to 706 (YVPPEEDFNIQERQQREQRPWTSESESEAEAQEETQAGSVRE).

The protein belongs to the anelloviridae capsid protein family.

It is found in the virion. In terms of biological role, self assemble to form an icosahedral capsid. This Torque teno virus (isolate Human/China/CT39F/2001) (TTV) protein is Capsid protein.